The sequence spans 71 residues: Dermaseptin-PT9 (71 aa).

Positions 1 to 22 (MAFLKKSLFLVLFLGLVSLSIC) are cleaved as a signal peptide. Positions 23-43 (EEEKRENEMEQEDDEQSEMKR) are excised as a propeptide. V68 bears the Valine amide mark. A propeptide spanning residues 69 to 71 (GEQ) is cleaved from the precursor.

Belongs to the frog skin active peptide (FSAP) family. Dermaseptin subfamily. Expressed by the skin glands.

It localises to the secreted. The protein localises to the target cell membrane. Its function is as follows. Antimicrobial peptide with activity against fungi, Gram-positive and Gram-negative bacteria. Is active against S.aureus (MIC=16 uM), MRSA (MIC=32 uM), E.faecalis (MIC=16 uM), E.coli (MIC=8 uM), P.aeruginosa (MIC=16 uM), K.pneumoniae (MIC=8 uM), and C.albicans (MIC=64 uM). Also inhibits biofilm formation. Acts by disrupting cell membranes. Also exhibits anti-proliferative effect against various human cancer cells. Shows weak hemolytic activity towards horse erythrocytes. The chain is Dermaseptin-PT9 from Phyllomedusa tarsius (Brownbelly leaf frog).